Here is a 166-residue protein sequence, read N- to C-terminus: Small ribosomal subunit protein uS5 (166 aa).

Positions 11–74 (LQEKLVAVNR…EQARRNMVKV (64 aa)) constitute an S5 DRBM domain.

Belongs to the universal ribosomal protein uS5 family. Part of the 30S ribosomal subunit. Contacts proteins S4 and S8.

In terms of biological role, with S4 and S12 plays an important role in translational accuracy. Its function is as follows. Located at the back of the 30S subunit body where it stabilizes the conformation of the head with respect to the body. The sequence is that of Small ribosomal subunit protein uS5 from Tolumonas auensis (strain DSM 9187 / NBRC 110442 / TA 4).